Here is a 219-residue protein sequence, read N- to C-terminus: Thiopurine S-methyltransferase (219 aa).

S-adenosyl-L-methionine-binding residues include W10, L45, E66, and R123.

It belongs to the class I-like SAM-binding methyltransferase superfamily. TPMT family.

It is found in the cytoplasm. It catalyses the reaction S-adenosyl-L-methionine + a thiopurine = S-adenosyl-L-homocysteine + a thiopurine S-methylether.. In Shewanella pealeana (strain ATCC 700345 / ANG-SQ1), this protein is Thiopurine S-methyltransferase.